We begin with the raw amino-acid sequence, 47 residues long: Large ribosomal subunit protein bL34 (47 aa).

The protein belongs to the bacterial ribosomal protein bL34 family.

This is Large ribosomal subunit protein bL34 from Corynebacterium glutamicum (strain R).